We begin with the raw amino-acid sequence, 112 residues long: Putative pterin-4-alpha-carbinolamine dehydratase (112 aa).

This sequence belongs to the pterin-4-alpha-carbinolamine dehydratase family.

The enzyme catalyses (4aS,6R)-4a-hydroxy-L-erythro-5,6,7,8-tetrahydrobiopterin = (6R)-L-erythro-6,7-dihydrobiopterin + H2O. The sequence is that of Putative pterin-4-alpha-carbinolamine dehydratase from Syntrophotalea carbinolica (strain DSM 2380 / NBRC 103641 / GraBd1) (Pelobacter carbinolicus).